Reading from the N-terminus, the 392-residue chain is tRNA (guanine-N(7)-)-methyltransferase (392 aa).

Residues Glu-123, Glu-148, and Asp-175 each contribute to the S-adenosyl-L-methionine site. Substrate is bound by residues Lys-201 and Asp-231.

It belongs to the class I-like SAM-binding methyltransferase superfamily. TrmB family.

It catalyses the reaction guanosine(46) in tRNA + S-adenosyl-L-methionine = N(7)-methylguanosine(46) in tRNA + S-adenosyl-L-homocysteine. The protein operates within tRNA modification; N(7)-methylguanine-tRNA biosynthesis. Functionally, catalyzes the formation of N(7)-methylguanine at position 46 (m7G46) in tRNA. This Campylobacter jejuni subsp. jejuni serotype O:6 (strain 81116 / NCTC 11828) protein is tRNA (guanine-N(7)-)-methyltransferase.